A 100-amino-acid polypeptide reads, in one-letter code: Large ribosomal subunit protein eL21 (100 aa).

Positions 1–21 (MVKRTHGYRYKSRKLLRKKPR) are enriched in basic residues. Residues 1–22 (MVKRTHGYRYKSRKLLRKKPRE) form a disordered region.

The protein belongs to the eukaryotic ribosomal protein eL21 family.

The chain is Large ribosomal subunit protein eL21 from Pyrobaculum neutrophilum (strain DSM 2338 / JCM 9278 / NBRC 100436 / V24Sta) (Thermoproteus neutrophilus).